We begin with the raw amino-acid sequence, 128 residues long: Large ribosomal subunit protein bL12 (128 aa).

It belongs to the bacterial ribosomal protein bL12 family. In terms of assembly, homodimer. Part of the ribosomal stalk of the 50S ribosomal subunit. Forms a multimeric L10(L12)X complex, where L10 forms an elongated spine to which 2 to 4 L12 dimers bind in a sequential fashion. Binds GTP-bound translation factors.

In terms of biological role, forms part of the ribosomal stalk which helps the ribosome interact with GTP-bound translation factors. Is thus essential for accurate translation. The protein is Large ribosomal subunit protein bL12 of Methylobacillus flagellatus (strain ATCC 51484 / DSM 6875 / VKM B-1610 / KT).